Here is a 277-residue protein sequence, read N- to C-terminus: Thiazole synthase (277 aa).

Lys118 serves as the catalytic Schiff-base intermediate with DXP. Residues Gly179, Ala205–Gly206, and Asn227–Thr228 each bind 1-deoxy-D-xylulose 5-phosphate.

The protein belongs to the ThiG family. As to quaternary structure, homotetramer. Forms heterodimers with either ThiH or ThiS.

The protein resides in the plastid. The protein localises to the chloroplast. It carries out the reaction [ThiS sulfur-carrier protein]-C-terminal-Gly-aminoethanethioate + 2-iminoacetate + 1-deoxy-D-xylulose 5-phosphate = [ThiS sulfur-carrier protein]-C-terminal Gly-Gly + 2-[(2R,5Z)-2-carboxy-4-methylthiazol-5(2H)-ylidene]ethyl phosphate + 2 H2O + H(+). It participates in cofactor biosynthesis; thiamine diphosphate biosynthesis. Catalyzes the rearrangement of 1-deoxy-D-xylulose 5-phosphate (DXP) to produce the thiazole phosphate moiety of thiamine. Sulfur is provided by the thiocarboxylate moiety of the carrier protein ThiS. In vitro, sulfur can be provided by H(2)S. The polypeptide is Thiazole synthase (Emiliania huxleyi (Coccolithophore)).